A 121-amino-acid chain; its full sequence is ATP synthase epsilon chain (121 aa).

This sequence belongs to the ATPase epsilon chain family. As to quaternary structure, F-type ATPases have 2 components, CF(1) - the catalytic core - and CF(0) - the membrane proton channel. CF(1) has five subunits: alpha(3), beta(3), gamma(1), delta(1), epsilon(1). CF(0) has three main subunits: a, b and c.

The protein resides in the cell membrane. Produces ATP from ADP in the presence of a proton gradient across the membrane. This chain is ATP synthase epsilon chain, found in Mycobacterium leprae (strain Br4923).